A 400-amino-acid polypeptide reads, in one-letter code: Lysophospholipid transporter LplT (400 aa).

12 helical membrane-spanning segments follow: residues V19 to A39, V53 to A73, A91 to I111, M139 to A159, I164 to I184, S195 to W213, L227 to L247, Y257 to V277, T281 to L301, A304 to V324, N352 to A372, and V373 to W393.

The protein belongs to the major facilitator superfamily. LplT (TC 2.A.1.42) family.

The protein resides in the cell inner membrane. In terms of biological role, catalyzes the facilitated diffusion of 2-acyl-glycero-3-phosphoethanolamine (2-acyl-GPE) into the cell. The sequence is that of Lysophospholipid transporter LplT from Salmonella paratyphi B (strain ATCC BAA-1250 / SPB7).